The sequence spans 182 residues: CDP-diacylglycerol--glycerol-3-phosphate 3-phosphatidyltransferase (182 aa).

The Cytoplasmic portion of the chain corresponds to 2–12 (QFNIPTLLTLF). The chain crosses the membrane as a helical span at residues 13 to 37 (RVILIPFFVVVFYLPFAWAPMVSAL). The Periplasmic portion of the chain corresponds to 38–60 (IFCIAAITDWFDGFLARRWNQST). A helical membrane pass occupies residues 61-81 (RFGAFLDPVADKVLVAIAMVL). Topologically, residues 82 to 86 (VTEHY) are cytoplasmic. Residues 87–107 (HSWWVTLPAATMIAREIIISA) form a helical membrane-spanning segment. Topologically, residues 108 to 145 (LREWMAELGKRSSVAVSWIGKVKTTAQMVALAWLLWRP) are periplasmic. A helical transmembrane segment spans residues 146–168 (NIWVEYAGIALFFVAAVLTLWSM). The Cytoplasmic segment spans residues 169–181 (LQYLSAARGDLLD).

Belongs to the CDP-alcohol phosphatidyltransferase class-I family.

It is found in the cell inner membrane. The catalysed reaction is a CDP-1,2-diacyl-sn-glycerol + sn-glycerol 3-phosphate = a 1,2-diacyl-sn-glycero-3-phospho-(1'-sn-glycero-3'-phosphate) + CMP + H(+). It functions in the pathway phospholipid metabolism; phosphatidylglycerol biosynthesis; phosphatidylglycerol from CDP-diacylglycerol: step 1/2. Functionally, catalyzes the conversion of cytidine diphosphate diacylglycerol (CDP-DG) and glycerol 3-phosphate into phosphatidylglycerol. Essential for the synthesis of anionic phospholipids, thereby playing a role in balancing the ratio of zwitterionic and anionic phospholipids, which is thought to be important for normal membrane function. In Salmonella paratyphi A (strain ATCC 9150 / SARB42), this protein is CDP-diacylglycerol--glycerol-3-phosphate 3-phosphatidyltransferase.